The primary structure comprises 210 residues: Thymidylate kinase (210 aa).

ATP is bound at residue 10–17 (GPEGAGKS).

This sequence belongs to the thymidylate kinase family.

The catalysed reaction is dTMP + ATP = dTDP + ADP. Its function is as follows. Phosphorylation of dTMP to form dTDP in both de novo and salvage pathways of dTTP synthesis. The protein is Thymidylate kinase of Pseudomonas putida (strain ATCC 700007 / DSM 6899 / JCM 31910 / BCRC 17059 / LMG 24140 / F1).